We begin with the raw amino-acid sequence, 183 residues long: MKKKTTLSEEDQALFRQLMAGTRKIKQDTIVHRPQRKKISEVPVKRLIQEQADASHYFSDEFQPLLNTEGPVKYVRPDVSHFEAKKLRRGDYSPELFLDLHGLTQLQAKQELGALIAACRREHVFCACVMHGHGKHILKQQTPLWLAQHPHVMAFHQAPKEYGGDAALLVLIEVDEWLPPELP.

The Smr domain maps to 98–173 (LDLHGLTQLQ…GDAALLVLIE (76 aa)).

It belongs to the SmrB family. Associates with collided ribosomes, but not with correctly translating polysomes.

Functionally, acts as a ribosome collision sensor. Detects stalled/collided disomes (pairs of ribosomes where the leading ribosome is stalled and a second ribosome has collided with it) and endonucleolytically cleaves mRNA at the 5' boundary of the stalled ribosome. Stalled/collided disomes form a new interface (primarily via the 30S subunits) that binds SmrB. Cleaved mRNA becomes available for tmRNA ligation, leading to ribosomal subunit dissociation and rescue of stalled ribosomes. This is Ribosome rescue factor SmrB from Escherichia coli O17:K52:H18 (strain UMN026 / ExPEC).